We begin with the raw amino-acid sequence, 360 residues long: Protein OSB4, chloroplastic (360 aa).

The N-terminal 61 residues, 1–61 (MQFLGRSISK…AEKSSEEWPR (61 aa)), are a transit peptide targeting the chloroplast. The interval 28-64 (SQQFLSTSSTESSSRTRGGGGGNRAEKSSEEWPRPME) is disordered. The span at 33–43 (STSSTESSSRT) shows a compositional bias: low complexity. Residues 51–61 (RAEKSSEEWPR) are compositionally biased toward basic and acidic residues. One can recognise an SSB domain in the interval 71–188 (IANSIDLIGY…VMVRDLHYIE (118 aa)). PDF region stretches follow at residues 224 to 276 (WFDL…SELK) and 296 to 344 (WKDL…EKLP).

It localises to the plastid. It is found in the chloroplast. In terms of biological role, binds single-stranded DNA. The polypeptide is Protein OSB4, chloroplastic (OSB4) (Arabidopsis thaliana (Mouse-ear cress)).